Reading from the N-terminus, the 193-residue chain is uncharacterized protein (193 aa).

The interval 158–193 is disordered; the sequence is YNPIYDDHNPLPPEKKKSILSRTRSTKLSSGEITPV. A compositionally biased stretch (basic and acidic residues) spans 162–174; sequence YDDHNPLPPEKKK. A compositionally biased stretch (polar residues) spans 177–193; it reads LSRTRSTKLSSGEITPV.

This is an uncharacterized protein from Micromonas pusilla (Picoplanktonic green alga).